A 510-amino-acid polypeptide reads, in one-letter code: NAD(P)H-quinone oxidoreductase subunit 2 A, chloroplastic (510 aa).

Helical transmembrane passes span 24-44 (LLLF…GLIL), 57-77 (IPWL…ALLF), 99-119 (IFQF…VEYI), 124-144 (MAIT…MFLC), 149-169 (LITI…LSGY), 183-203 (YLLM…WLYG), 227-247 (PGIS…LSPA), 295-315 (WHLL…LIAI), 323-343 (MLAY…IVGD), 354-374 (YMLF…SFGL), 395-415 (ALSL…AGFF), 418-438 (LHLF…IGLL), and 484-504 (MIVC…IIAI).

The protein belongs to the complex I subunit 2 family. In terms of assembly, NDH is composed of at least 16 different subunits, 5 of which are encoded in the nucleus.

It localises to the plastid. The protein localises to the chloroplast thylakoid membrane. It carries out the reaction a plastoquinone + NADH + (n+1) H(+)(in) = a plastoquinol + NAD(+) + n H(+)(out). The catalysed reaction is a plastoquinone + NADPH + (n+1) H(+)(in) = a plastoquinol + NADP(+) + n H(+)(out). Its function is as follows. NDH shuttles electrons from NAD(P)H:plastoquinone, via FMN and iron-sulfur (Fe-S) centers, to quinones in the photosynthetic chain and possibly in a chloroplast respiratory chain. The immediate electron acceptor for the enzyme in this species is believed to be plastoquinone. Couples the redox reaction to proton translocation, and thus conserves the redox energy in a proton gradient. The chain is NAD(P)H-quinone oxidoreductase subunit 2 A, chloroplastic from Carica papaya (Papaya).